The primary structure comprises 217 residues: MGQKINPIGLRVGVIRDWEAKWYAEKDFASLLHEDLKIRKFIDNELKEASVSHVDIERAANRINIAIHTGKPGMVIGKGGSEIEKLRNKLNTLTDKKVHINVIEIKKIDIDARLVAENIARQLENRASFRRVQKQAITRAMKNGAKGIKTQVSGRLGGADIARAEQYSEGTVPLHTLRADIDYAHAEADTTYGKLGVKVWIYRGEVLPTKNTSEGGK.

The 69-residue stretch at 38-106 folds into the KH type-2 domain; it reads IRKFIDNELK…KVHINVIEIK (69 aa).

It belongs to the universal ribosomal protein uS3 family. As to quaternary structure, part of the 30S ribosomal subunit. Forms a tight complex with proteins S10 and S14.

Binds the lower part of the 30S subunit head. Binds mRNA in the 70S ribosome, positioning it for translation. The chain is Small ribosomal subunit protein uS3 from Staphylococcus epidermidis (strain ATCC 35984 / DSM 28319 / BCRC 17069 / CCUG 31568 / BM 3577 / RP62A).